We begin with the raw amino-acid sequence, 90 residues long: uncharacterized protein (90 aa).

The interval 62 to 90 is disordered; the sequence is RQLKKKQAYKPDPEASFSWSANTSTRGRR. Residues 78 to 90 are compositionally biased toward polar residues; that stretch reads FSWSANTSTRGRR.

This is an uncharacterized protein from Escherichia coli (strain K12).